Reading from the N-terminus, the 315-residue chain is MVVSLAGRDLLCLQDYTAEEIWTILETAKMFKIWQKIGKPHRLLEGKTLAMIFQKPSTRTRVSFEVAMAHLGGHALYLNAQDLQLRRGETIADTARVLSRYVDAIMARVYDHKDVEDLAKYATVPVINGLSDFSHPCQALADYMTIWEKKGTIKGVKVVYVGDGNNVAHSLMIAGTKLGADVVVATPEGYEPDEKVIKWAEQNAAESGGSFELLHDPVKAVKDADVIYTDVWASMGQEAEAEERRKIFRPFQVNKDLVKHAKPDYMFMHCLPAHRGEEVTDDVIDSPNSVVWDQAENRLHAQKAVLALVMGGIKF.

Residues 57–60 (STRT), Q84, R108, and 135–138 (HPCQ) contribute to the carbamoyl phosphate site. Residues N166, D230, and 234 to 235 (SM) contribute to the L-ornithine site. Residues 270–271 (CL) and R298 each bind carbamoyl phosphate.

It belongs to the aspartate/ornithine carbamoyltransferase superfamily. OTCase family. As to quaternary structure, homododecamer (tetramer of trimers).

The protein resides in the cytoplasm. It carries out the reaction carbamoyl phosphate + L-ornithine = L-citrulline + phosphate + H(+). It participates in amino-acid biosynthesis; L-arginine biosynthesis; L-arginine from L-ornithine and carbamoyl phosphate: step 1/3. With respect to regulation, inhibited by the bisubstrate delta-N-phosphonoacetyl-L-ornithine (PALO). Functionally, reversibly catalyzes the transfer of the carbamoyl group from carbamoyl phosphate (CP) to the N(epsilon) atom of ornithine (ORN) to produce L-citrulline, which is a substrate for argininosuccinate synthetase, the enzyme involved in the final step in arginine biosynthesis. This chain is Ornithine carbamoyltransferase, anabolic, found in Pyrococcus furiosus (strain ATCC 43587 / DSM 3638 / JCM 8422 / Vc1).